The following is a 440-amino-acid chain: UDP-glycosyltransferase 87A1 (440 aa).

UDP-alpha-D-glucose contacts are provided by residues serine 263, 312–314 (CDQ), 329–337 (HCGYNSTLE), and 351–354 (FWDQ).

The protein belongs to the UDP-glycosyltransferase family.

This is UDP-glycosyltransferase 87A1 (UGT87A1) from Arabidopsis thaliana (Mouse-ear cress).